We begin with the raw amino-acid sequence, 124 residues long: Small ribosomal subunit protein uS13c (124 aa).

The disordered stretch occupies residues 100–124; it reads GQRTRTNARTRKGKVKTAVAKKKGR. Positions 101–124 are enriched in basic residues; sequence QRTRTNARTRKGKVKTAVAKKKGR.

Belongs to the universal ribosomal protein uS13 family. As to quaternary structure, part of the 30S ribosomal subunit.

Its subcellular location is the plastid. It localises to the chloroplast. Functionally, located at the top of the head of the 30S subunit, it contacts several helices of the 16S rRNA. This chain is Small ribosomal subunit protein uS13c, found in Emiliania huxleyi (Coccolithophore).